Consider the following 1252-residue polypeptide: DNA-directed RNA polymerase subunit beta (1252 aa).

This sequence belongs to the RNA polymerase beta chain family. The RNAP catalytic core consists of 2 alpha, 1 beta, 1 beta' and 1 omega subunit. When a sigma factor is associated with the core the holoenzyme is formed, which can initiate transcription.

It catalyses the reaction RNA(n) + a ribonucleoside 5'-triphosphate = RNA(n+1) + diphosphate. Its function is as follows. DNA-dependent RNA polymerase catalyzes the transcription of DNA into RNA using the four ribonucleoside triphosphates as substrates. The chain is DNA-directed RNA polymerase subunit beta from Chlamydia felis (strain Fe/C-56) (Chlamydophila felis).